The following is a 152-amino-acid chain: MKTSMKLDIVSVEAALYAGDAHFVVVPGESGELGIYPHHAPLLTRIRPGVVTLVDAPTGEHRRLLVAGGVLEVSRDGVTLIADHALRTPELDELRTREARHAADDWRQRYAHENRRAFDFASARAELMEEIRRFFAMALRQQAPHDKPGSAG.

This sequence belongs to the ATPase epsilon chain family. In terms of assembly, F-type ATPases have 2 components, CF(1) - the catalytic core - and CF(0) - the membrane proton channel. CF(1) has five subunits: alpha(3), beta(3), gamma(1), delta(1), epsilon(1). CF(0) has three main subunits: a, b and c.

Its subcellular location is the cell inner membrane. Its function is as follows. Produces ATP from ADP in the presence of a proton gradient across the membrane. This Burkholderia orbicola (strain AU 1054) protein is ATP synthase epsilon chain 2.